An 856-amino-acid chain; its full sequence is Nuclear valosin-containing protein-like (856 aa).

The interaction with RPL5 stretch occupies residues 1–220; that stretch reads MKPRPAGFVD…SLLESDMKRK (220 aa). The Nucleolar localization signal motif lies at 49 to 52; sequence RRKR. The residue at position 70 (Lys70) is an N6-acetyllysine. The interval 84-175 is disordered; sequence AKRARQGEED…AKDSEGGWFI (92 aa). Residues 85–88 carry the Nuclear localization signal motif; it reads KRAR. Residues 92–111 are compositionally biased toward acidic residues; it reads EDNEYTESYSDDDSSMEDYP. Composition is skewed to polar residues over residues 114–124 and 133–158; these read QSANHMNSSLL and DSVS…SKTG. Ser134 bears the Phosphoserine mark. Thr138 carries the post-translational modification Phosphothreonine. Position 156 is an N6-acetyllysine (Lys156). Residue Ser191 is modified to Phosphoserine. The interval 197–236 is disordered; the sequence is PKKPITEIQDSKDSSLLESDMKRKGKLKNKGSKRKKEDLQ. Basic and acidic residues predominate over residues 205–218; it reads QDSKDSSLLESDMK. A Glycyl lysine isopeptide (Lys-Gly) (interchain with G-Cter in SUMO2) cross-link involves residue Lys208. Phosphoserine occurs at positions 211 and 215. Positions 218–232 match the Nuclear localization signal motif; sequence KRKGKLKNKGSKRKK. The segment covering 219 to 230 has biased composition (basic residues); the sequence is RKGKLKNKGSKR. Residues 267–474 are interaction with WDR74; it reads VGGNDMTLKE…LTPGFVGADL (208 aa). Residue 305 to 312 coordinates ATP; sequence GPPGCGKT. Positions 496–523 are disordered; that stretch reads QQKKNPEMEDLPSKGVQEERLGTEPTSE. 622–629 provides a ligand contact to ATP; that stretch reads GPPGCGKT.

The protein belongs to the AAA ATPase family. Interacts with NCL/nucleolin. Isoform 1 and isoform 2 interact with TERT and isoform 1 exhibits a higher binding affinity for TERT compared to isoform 2. Isoform 1 interacts with MTREX in an ATP-dependent manner; the interaction is required to associate NVL with nuclear RNA exosome. Isoform 1 interacts with RPL5 in an ATP-dependent manner. Interacts with WDR74 (through WDR repeats); the interaction is independent of RNA or pre-60S ribosome particles. In terms of tissue distribution, widely expressed. Highest level of expression in heart, placenta, skeletal muscle, pancreas and retina.

The protein localises to the nucleus. Its subcellular location is the nucleoplasm. The protein resides in the nucleolus. Functionally, participates in the assembly of the telomerase holoenzyme and effecting of telomerase activity via its interaction with TERT. Involved in both early and late stages of the pre-rRNA processing pathways. Spatiotemporally regulates 60S ribosomal subunit biogenesis in the nucleolus. Catalyzes the release of specific assembly factors, such as WDR74, from pre-60S ribosomal particles through the ATPase activity. The polypeptide is Nuclear valosin-containing protein-like (Homo sapiens (Human)).